The sequence spans 337 residues: Adenylosuccinate synthetase (337 aa).

Residues 12–18 and 42–44 contribute to the GTP site; these read GDEGKGK and GHT. The active-site Proton acceptor is the aspartate 13. Mg(2+)-binding residues include aspartate 13 and glycine 42. IMP is bound by residues 13 to 16, 40 to 43, threonine 127, arginine 141, glutamine 179, threonine 194, and arginine 256; these read DEGK and NAGH. Histidine 43 (proton donor) is an active-site residue. 252 to 258 serves as a coordination point for substrate; sequence TVTGRRR. GTP-binding positions include arginine 258, 284-286, and 324-326; these read CLD and STG.

It belongs to the adenylosuccinate synthetase family. Homodimer. Mg(2+) serves as cofactor.

Its subcellular location is the cytoplasm. The enzyme catalyses IMP + L-aspartate + GTP = N(6)-(1,2-dicarboxyethyl)-AMP + GDP + phosphate + 2 H(+). The protein operates within purine metabolism; AMP biosynthesis via de novo pathway; AMP from IMP: step 1/2. Functionally, plays an important role in the de novo pathway of purine nucleotide biosynthesis. Catalyzes the first committed step in the biosynthesis of AMP from IMP. The chain is Adenylosuccinate synthetase from Methanococcus maripaludis (strain C5 / ATCC BAA-1333).